The primary structure comprises 509 residues: Glutamyl-tRNA(Gln) amidotransferase subunit A (509 aa).

Catalysis depends on charge relay system residues K75 and S150. The Acyl-ester intermediate role is filled by S174. Positions 471-509 (DWHKRRPPLGQPPLEQAQGTAQQPKAKSKSTKGSKKSKS) are disordered. The span at 496–509 (AKSKSTKGSKKSKS) shows a compositional bias: basic residues.

It belongs to the amidase family. GatA subfamily. Heterotrimer of A, B and C subunits.

It carries out the reaction L-glutamyl-tRNA(Gln) + L-glutamine + ATP + H2O = L-glutaminyl-tRNA(Gln) + L-glutamate + ADP + phosphate + H(+). Its function is as follows. Allows the formation of correctly charged Gln-tRNA(Gln) through the transamidation of misacylated Glu-tRNA(Gln) in organisms which lack glutaminyl-tRNA synthetase. The reaction takes place in the presence of glutamine and ATP through an activated gamma-phospho-Glu-tRNA(Gln). The protein is Glutamyl-tRNA(Gln) amidotransferase subunit A of Synechococcus sp. (strain JA-3-3Ab) (Cyanobacteria bacterium Yellowstone A-Prime).